A 461-amino-acid chain; its full sequence is Cyclic AMP-responsive element-binding protein 3-like protein 3 (461 aa).

At 1–322 (MNTDLAAGKM…STSKSAQTGT (322 aa)) the chain is on the cytoplasmic side. Residues 51–120 (DQQVLPNPDS…AGCHPAQPGK (70 aa)) form a disordered region. The segment covering 63-85 (FLSSILGSGDSLPSSPLWSPEGS) has biased composition (low complexity). At S173 the chain carries Phosphoserine. Positions 243-306 (VLKKIRRKIR…LSLLEQLKKL (64 aa)) constitute a bZIP domain. The segment at 245-274 (KKIRRKIRNKQSAQESRKKKKEYIDGLETR) is basic motif. Residues 285 to 306 (LQRKVLHLEKQNLSLLEQLKKL) are leucine-zipper. Residue K294 forms a Glycyl lysine isopeptide (Lys-Gly) (interchain with G-Cter in ubiquitin) linkage. The chain crosses the membrane as a helical; Signal-anchor for type II membrane protein span at residues 323–343 (CVAVLLLSFALIILPSISPFG). The Lumenal portion of the chain corresponds to 344-461 (PNKTESPGDF…AGLEAAGDEL (118 aa)). Positions 370–408 (RVAADAVPGSEAPGPRPEADTTREESPGSPGADWGFQDT) are disordered. S379 is a glycosylation site (O-linked (GalNAc...) serine). A compositionally biased stretch (basic and acidic residues) spans 386–395 (PEADTTREES). N-linked (GlcNAc...) asparagine glycans are attached at residues N410, N413, N420, and N427. The tract at residues 442-461 (APGPSTGSGRAGLEAAGDEL) is disordered.

This sequence belongs to the bZIP family. ATF subfamily. In terms of assembly, binds DNA as a dimer. May form homodimers. Interacts with ATF6. Interacts with SYNV1/HRD1; this interaction leads to CREB3L3 ubiquitination and proteasomal degradation. Post-translationally, controlled by regulated intramembrane proteolysis (RIP). Following ER stress a fragment containing the cytoplasmic transcription factor domain is released by proteolysis. The cleavage seems to be performed sequentially by site-1 and site-2 proteases (PS1 and PS2). N- and O-glycosylated. N-glycosylation is required for optimal proteolytic activation. O-glycosylated with core 1 or possibly core 8 glycans. In terms of processing, ubiquitinated at Lys-294 by SYNV1/HRD1 via 'Lys-27'-linked ubiquitin. As to expression, exclusively expressed in liver. Underexpressed in hepatocellular carcinoma tissues.

It is found in the endoplasmic reticulum membrane. It localises to the nucleus. Its function is as follows. Transcription factor that may act during endoplasmic reticulum stress by activating unfolded protein response target genes. Activated in response to cAMP stimulation. In vitro, binds to the cAMP response element (CRE) and box-B element. Activates transcription through box-B element. Activates transcription through CRE. May function synergistically with ATF6. In acute inflammatory response, may activate expression of acute phase response (APR) genes. May be involved in growth suppression. Regulates FGF21 transcription. Plays a crucial role in the regulation of triglyceride metabolism and is required for the maintenance of normal plasma triglyceride concentrations. The chain is Cyclic AMP-responsive element-binding protein 3-like protein 3 (CREB3L3) from Homo sapiens (Human).